A 1220-amino-acid polypeptide reads, in one-letter code: Plasma membrane calcium-transporting ATPase 1 (1220 aa).

At Gly-2 the chain carries N-acetylglycine. Over 2-105 (GDMANNSVAY…KTFLQLVWEA (104 aa)) the chain is Cytoplasmic. Ser-8 and Ser-17 each carry phosphoserine. The chain crosses the membrane as a helical span at residues 106-126 (LQDVTLIILEIAAIVSLGLSF). At 127–154 (YQPPEGDNALCGEVSVGEEEGEGETGWI) the chain is on the extracellular side. A helical transmembrane segment spans residues 155–175 (EGAAILLSVVCVVLVTAFNDW). The Cytoplasmic portion of the chain corresponds to 176–366 (SKEKQFRGLQ…KEKSVLQGKL (191 aa)). The disordered stretch occupies residues 297-356 (EEEKKDEKKKEKKNKKQDGAIENRNKAKAQDGAAMEMQPLKSEEGGDGDEKDKKKANLPK). 2 stretches are compositionally biased toward basic and acidic residues: residues 312 to 325 (KQDG…KAKA) and 337 to 356 (KSEE…NLPK). Ser-338 is modified (phosphoserine). The helical transmembrane segment at 367-386 (TKLAVQIGKAGLLMSAITVI) threads the bilayer. Residues 387–418 (ILVLYFVIDTFWVQKRPWLAECTPIYIQYFVK) lie on the Extracellular side of the membrane. A helical membrane pass occupies residues 419–439 (FFIIGVTVLVVAVPEGLPLAV). The Cytoplasmic portion of the chain corresponds to 440 to 855 (TISLAYSVKK…RNVYDSISKF (416 aa)). Asp-475 acts as the 4-aspartylphosphate intermediate in catalysis. Mg(2+)-binding residues include Asp-475, Thr-477, and Asp-797. Residues 856 to 876 (LQFQLTVNVVAVIVAFTGACI) form a helical membrane-spanning segment. Residues 877–882 (TQDSPL) are Extracellular-facing. The helical transmembrane segment at 883-903 (KAVQMLWVNLIMDTLASLALA) threads the bilayer. The Cytoplasmic portion of the chain corresponds to 904–927 (TEPPTESLLLRKPYGRNKPLISRT). Residues 928–948 (MMKNILGHAFYQLVVVFTLLF) form a helical membrane-spanning segment. Residues 949–971 (AGEKFFDIDSGRNAPLHAPPSEH) lie on the Extracellular side of the membrane. The chain crosses the membrane as a helical span at residues 972 to 991 (YTIVFNTFVLMQLFNEINAR). Topologically, residues 992–1005 (KIHGERNVFEGIFN) are cytoplasmic. The chain crosses the membrane as a helical span at residues 1006–1027 (NAIFCTIVLGTFVVQIIIVQFG). At 1028–1039 (GKPFSCSELSIE) the chain is on the extracellular side. The chain crosses the membrane as a helical span at residues 1040-1060 (QWLWSIFLGMGTLLWGQLIST). Topologically, residues 1061 to 1220 (IPTSRLKFLK…SPLHSLETSL (160 aa)) are cytoplasmic. The calmodulin-binding subdomain A stretch occupies residues 1100 to 1117 (LRRGQILWFRGLNRIQTQ). Phosphothreonine; by PKC is present on Thr-1116. A required for basolateral membrane targeting region spans residues 1118 to 1220 (IRVVNAFRSS…SPLHSLETSL (103 aa)). Residues Ser-1140 and Ser-1155 each carry the phosphoserine modification. The disordered stretch occupies residues 1162-1220 (IDDTDAEDDAPTKRNSSPPPSPNKNNNAVDSGIHLTIEMNKSATSSSPGSPLHSLETSL). Phosphothreonine is present on Thr-1165. Ser-1177 carries the phosphoserine; by PKA modification. A phosphoserine mark is found at Ser-1178 and Ser-1182. The span at 1200–1220 (MNKSATSSSPGSPLHSLETSL) shows a compositional bias: polar residues.

Belongs to the cation transport ATPase (P-type) (TC 3.A.3) family. Type IIB subfamily. As to quaternary structure, monomer. Dimer. Oligomer. Calmodulin binding. Interacts with PDZD11. Interacts with SLC35G1 and STIM1. Interacts with YWHAE; interacts with the monomeric and dimeric forms of the YWHAE but prefer the monomer form; this interaction inhibits calcium-transporting ATPase activity. Interacts with NPTN; this interaction stabilizes ATP2B1 and increases ATPase activity; this interaction controls T cell calcium homeostasis following T cell activation. Interacts with EPB41; regulates small intestinal calcium absorption through regulation of membrane expression of ATP2B1. In terms of tissue distribution, isoform B is ubiquitously expressed. Isoforms A and E have only been found in brain cortex. Isoform C is found in brain cortex, skeletal muscle and heart muscle. Isoform D has only been found in fetal skeletal muscle. Isoform K has been found in small intestine and liver. Isoform B is expressed in hair cells of inner ear.

Its subcellular location is the cell membrane. The protein localises to the basolateral cell membrane. The protein resides in the synapse. It localises to the presynaptic cell membrane. It is found in the cytoplasmic vesicle. Its subcellular location is the secretory vesicle. The protein localises to the synaptic vesicle membrane. The catalysed reaction is Ca(2+)(in) + ATP + H2O = Ca(2+)(out) + ADP + phosphate + H(+). Its function is as follows. Catalyzes the hydrolysis of ATP coupled with the transport of calcium from the cytoplasm to the extracellular space thereby maintaining intracellular calcium homeostasis. Plays a role in blood pressure regulation through regulation of intracellular calcium concentration and nitric oxide production leading to regulation of vascular smooth muscle cells vasoconstriction. Positively regulates bone mineralization through absorption of calcium from the intestine. Plays dual roles in osteoclast differentiation and survival by regulating RANKL-induced calcium oscillations in preosteoclasts and mediating calcium extrusion in mature osteoclasts. Regulates insulin sensitivity through calcium/calmodulin signaling pathway by regulating AKT1 activation and NOS3 activation in endothelial cells. May play a role in synaptic transmission by modulating calcium and proton dynamics at the synaptic vesicles. The polypeptide is Plasma membrane calcium-transporting ATPase 1 (Rattus norvegicus (Rat)).